A 362-amino-acid chain; its full sequence is Ribosomal RNA large subunit methyltransferase M (362 aa).

S-adenosyl-L-methionine contacts are provided by residues S194, 227-230, D246, D266, and D284; that span reads CPGG. Catalysis depends on K313, which acts as the Proton acceptor.

It belongs to the class I-like SAM-binding methyltransferase superfamily. RNA methyltransferase RlmE family. RlmM subfamily. As to quaternary structure, monomer.

It localises to the cytoplasm. The catalysed reaction is cytidine(2498) in 23S rRNA + S-adenosyl-L-methionine = 2'-O-methylcytidine(2498) in 23S rRNA + S-adenosyl-L-homocysteine + H(+). In terms of biological role, catalyzes the 2'-O-methylation at nucleotide C2498 in 23S rRNA. The protein is Ribosomal RNA large subunit methyltransferase M of Aggregatibacter aphrophilus (strain NJ8700) (Haemophilus aphrophilus).